The following is a 96-amino-acid chain: MQALIEISDKQYLVKKGDTLFVPRQQTAIGDTMEISSMATIDGANTVLNPAVSVKAKVLGHVKDDKVVVFKKKRRKRYQSRNGHRQQMTQIEVVSL.

Over residues 73–84 the composition is skewed to basic residues; the sequence is KRRKRYQSRNGH. A disordered region spans residues 73-96; that stretch reads KRRKRYQSRNGHRQQMTQIEVVSL. A compositionally biased stretch (polar residues) spans 85-96; it reads RQQMTQIEVVSL.

Belongs to the bacterial ribosomal protein bL21 family. In terms of assembly, part of the 50S ribosomal subunit. Contacts protein L20.

In terms of biological role, this protein binds to 23S rRNA in the presence of protein L20. This chain is Large ribosomal subunit protein bL21, found in Chlorobium luteolum (strain DSM 273 / BCRC 81028 / 2530) (Pelodictyon luteolum).